The chain runs to 366 residues: UDP-N-acetylglucosamine--N-acetylmuramyl-(pentapeptide) pyrophosphoryl-undecaprenol N-acetylglucosamine transferase (366 aa).

Residues 10-12, Asn-124, Arg-166, Ser-196, and Gln-296 contribute to the UDP-N-acetyl-alpha-D-glucosamine site; that span reads TGG.

Belongs to the glycosyltransferase 28 family. MurG subfamily.

Its subcellular location is the cell membrane. The enzyme catalyses di-trans,octa-cis-undecaprenyl diphospho-N-acetyl-alpha-D-muramoyl-L-alanyl-D-glutamyl-meso-2,6-diaminopimeloyl-D-alanyl-D-alanine + UDP-N-acetyl-alpha-D-glucosamine = di-trans,octa-cis-undecaprenyl diphospho-[N-acetyl-alpha-D-glucosaminyl-(1-&gt;4)]-N-acetyl-alpha-D-muramoyl-L-alanyl-D-glutamyl-meso-2,6-diaminopimeloyl-D-alanyl-D-alanine + UDP + H(+). The protein operates within cell wall biogenesis; peptidoglycan biosynthesis. Its function is as follows. Cell wall formation. Catalyzes the transfer of a GlcNAc subunit on undecaprenyl-pyrophosphoryl-MurNAc-pentapeptide (lipid intermediate I) to form undecaprenyl-pyrophosphoryl-MurNAc-(pentapeptide)GlcNAc (lipid intermediate II). The chain is UDP-N-acetylglucosamine--N-acetylmuramyl-(pentapeptide) pyrophosphoryl-undecaprenol N-acetylglucosamine transferase from Alkaliphilus oremlandii (strain OhILAs) (Clostridium oremlandii (strain OhILAs)).